The primary structure comprises 275 residues: Phosphate import ATP-binding protein PstB (275 aa).

The 243-residue stretch at 28–270 folds into the ABC transporter domain; the sequence is MSAKNVSVFY…PREERTKDYI (243 aa). ATP is bound at residue 60 to 67; that stretch reads GPSGCGKS.

It belongs to the ABC transporter superfamily. Phosphate importer (TC 3.A.1.7) family. The complex is composed of two ATP-binding proteins (PstB), two transmembrane proteins (PstC and PstA) and a solute-binding protein (PstS).

It is found in the cell inner membrane. The catalysed reaction is phosphate(out) + ATP + H2O = ADP + 2 phosphate(in) + H(+). Functionally, part of the ABC transporter complex PstSACB involved in phosphate import. Responsible for energy coupling to the transport system. The chain is Phosphate import ATP-binding protein PstB from Novosphingobium aromaticivorans (strain ATCC 700278 / DSM 12444 / CCUG 56034 / CIP 105152 / NBRC 16084 / F199).